Here is a 442-residue protein sequence, read N- to C-terminus: D-inositol 3-phosphate glycosyltransferase (442 aa).

His-15 is a binding site for 1D-myo-inositol 3-phosphate. UDP-N-acetyl-alpha-D-glucosamine is bound by residues 21–22 and Gly-29; that span reads QP. 1D-myo-inositol 3-phosphate is bound by residues 26 to 31, Lys-84, Tyr-117, Thr-141, and Arg-161; that span reads DAGGMN. Positions 235, 240, and 299 each coordinate UDP-N-acetyl-alpha-D-glucosamine. Mg(2+)-binding residues include Tyr-308, Arg-309, and Ser-311. Residues Glu-321 and Glu-329 each contribute to the UDP-N-acetyl-alpha-D-glucosamine site. A Mg(2+)-binding site is contributed by Thr-335.

The protein belongs to the glycosyltransferase group 1 family. MshA subfamily. Homodimer.

The catalysed reaction is 1D-myo-inositol 3-phosphate + UDP-N-acetyl-alpha-D-glucosamine = 1D-myo-inositol 2-acetamido-2-deoxy-alpha-D-glucopyranoside 3-phosphate + UDP + H(+). Catalyzes the transfer of a N-acetyl-glucosamine moiety to 1D-myo-inositol 3-phosphate to produce 1D-myo-inositol 2-acetamido-2-deoxy-glucopyranoside 3-phosphate in the mycothiol biosynthesis pathway. In Rhodococcus erythropolis (strain PR4 / NBRC 100887), this protein is D-inositol 3-phosphate glycosyltransferase.